Reading from the N-terminus, the 341-residue chain is MNEKTDDIILAFESSADETSAAVVKNGNTILSNVVATQIASHQRFGGIVPEVASRHHLEWINRVTEEALTKAGINDPERQLSAVAATYGPGLVGSLLVGLMAGKTFAMVHHLPFIAVNHLAGHISAANFVKATVYPALAIMVSGGHTELLWMEKENTFQIIGTTLDDAAGEAFDKVGRILGLKYPAGKEIQEMAGHGKAVIKFPIAHTEDDFDFSFSGLKSSVLNYVHHHEQVSEEFNRNDVAASFQKAVVEAITEKSRLAIEKFQPKELLLGGGVAANLALRTAFENLSKEYKIELTEAPIKLSGDNAAMIGAAAYLNYKQRLFAPLDLNVDPSLNFARM.

Residues H119 and H123 each contribute to the Fe cation site. Substrate contacts are provided by residues 141-145, D174, G187, and N279; that span reads MVSGG. D307 lines the Fe cation pocket.

The protein belongs to the KAE1 / TsaD family. Requires Fe(2+) as cofactor.

It localises to the cytoplasm. It catalyses the reaction L-threonylcarbamoyladenylate + adenosine(37) in tRNA = N(6)-L-threonylcarbamoyladenosine(37) in tRNA + AMP + H(+). Its function is as follows. Required for the formation of a threonylcarbamoyl group on adenosine at position 37 (t(6)A37) in tRNAs that read codons beginning with adenine. Is involved in the transfer of the threonylcarbamoyl moiety of threonylcarbamoyl-AMP (TC-AMP) to the N6 group of A37, together with TsaE and TsaB. TsaD likely plays a direct catalytic role in this reaction. The sequence is that of tRNA N6-adenosine threonylcarbamoyltransferase from Oenococcus oeni (strain ATCC BAA-331 / PSU-1).